The chain runs to 518 residues: Subtilisin-like protease 1 (518 aa).

The N-terminal stretch at 1–19 is a signal peptide; the sequence is MGVFRFISISLAAVSAANA. Positions 20 to 116 are excised as a propeptide; the sequence is AQILSMPHAQ…VEPDTIISVH (97 aa). The Inhibitor I9 domain occupies 34–115; the sequence is SYIVMMKDDT…FVEPDTIISV (82 aa). The region spanning 126–400 is the Peptidase S8 domain; sequence SWGLARISNP…NVLINNGGAK (275 aa). Residues Asp-158 and His-190 each act as charge relay system in the active site. The disordered stretch occupies residues 175–198; sequence GSNQVNDGDDRDGSGHGTHTSGTM. Asn-233 and Asn-251 each carry an N-linked (GlcNAc...) asparagine glycan. Positions 282–294 are enriched in polar residues; that stretch reads NDNQDAQSSSPAS. Positions 282 to 312 are disordered; it reads NDNQDAQSSSPASEPSVCTVGSSAEDDSRSS. Ser-345 (charge relay system) is an active-site residue. Residues 378–394 show a composition bias toward polar residues; that stretch reads TSSITDAGPGTPTNVLI. Positions 378 to 496 are disordered; sequence TSSITDAGPG…PYPGGDNFDF (119 aa). Pro residues-rich tracts occupy residues 405-470 and 478-487; these read NPNP…PGEP and APAPQHPHTP.

Belongs to the peptidase S8 family.

The protein resides in the secreted. Its function is as follows. Secreted subtilisin-like serine protease with keratinolytic activity that contributes to pathogenicity. The chain is Subtilisin-like protease 1 (SUB1) from Trichophyton verrucosum (strain HKI 0517).